The following is a 250-amino-acid chain: Triosephosphate isomerase (250 aa).

9 to 11 (NWK) lines the substrate pocket. Residue H95 is the Electrophile of the active site. The active-site Proton acceptor is the E167. Residues G173, S213, and 234–235 (GG) contribute to the substrate site.

The protein belongs to the triosephosphate isomerase family. Homodimer.

The protein localises to the cytoplasm. The catalysed reaction is D-glyceraldehyde 3-phosphate = dihydroxyacetone phosphate. It participates in carbohydrate biosynthesis; gluconeogenesis. The protein operates within carbohydrate degradation; glycolysis; D-glyceraldehyde 3-phosphate from glycerone phosphate: step 1/1. Its function is as follows. Involved in the gluconeogenesis. Catalyzes stereospecifically the conversion of dihydroxyacetone phosphate (DHAP) to D-glyceraldehyde-3-phosphate (G3P). The protein is Triosephosphate isomerase of Chloroflexus aurantiacus (strain ATCC 29366 / DSM 635 / J-10-fl).